The primary structure comprises 213 residues: Putative thiamine-phosphate synthase (213 aa).

Residues 38–42 and Asn-70 each bind 4-amino-2-methyl-5-(diphosphooxymethyl)pyrimidine; that span reads QLREK. Residue Asp-71 participates in Mg(2+) binding. Ser-109 is a binding site for 4-amino-2-methyl-5-(diphosphooxymethyl)pyrimidine. Position 135–137 (135–137) interacts with 2-[(2R,5Z)-2-carboxy-4-methylthiazol-5(2H)-ylidene]ethyl phosphate; sequence TPS. Lys-138 serves as a coordination point for 4-amino-2-methyl-5-(diphosphooxymethyl)pyrimidine. Residues Gly-166 and 186-187 contribute to the 2-[(2R,5Z)-2-carboxy-4-methylthiazol-5(2H)-ylidene]ethyl phosphate site; that span reads IS.

The protein belongs to the thiamine-phosphate synthase family. It depends on Mg(2+) as a cofactor.

It carries out the reaction 2-[(2R,5Z)-2-carboxy-4-methylthiazol-5(2H)-ylidene]ethyl phosphate + 4-amino-2-methyl-5-(diphosphooxymethyl)pyrimidine + 2 H(+) = thiamine phosphate + CO2 + diphosphate. The enzyme catalyses 2-(2-carboxy-4-methylthiazol-5-yl)ethyl phosphate + 4-amino-2-methyl-5-(diphosphooxymethyl)pyrimidine + 2 H(+) = thiamine phosphate + CO2 + diphosphate. The catalysed reaction is 4-methyl-5-(2-phosphooxyethyl)-thiazole + 4-amino-2-methyl-5-(diphosphooxymethyl)pyrimidine + H(+) = thiamine phosphate + diphosphate. It participates in cofactor biosynthesis; thiamine diphosphate biosynthesis; thiamine phosphate from 4-amino-2-methyl-5-diphosphomethylpyrimidine and 4-methyl-5-(2-phosphoethyl)-thiazole: step 1/1. In terms of biological role, condenses 4-methyl-5-(beta-hydroxyethyl)thiazole monophosphate (THZ-P) and 2-methyl-4-amino-5-hydroxymethyl pyrimidine pyrophosphate (HMP-PP) to form thiamine monophosphate (TMP). The polypeptide is Putative thiamine-phosphate synthase (thiE) (Geobacter sulfurreducens (strain ATCC 51573 / DSM 12127 / PCA)).